We begin with the raw amino-acid sequence, 495 residues long: Phenylalanine--tRNA ligase alpha subunit (495 aa).

L-phenylalanine contacts are provided by residues threonine 338, 377 to 379, and tyrosine 417; that span reads QLE. Glutamate 419 contributes to the Mg(2+) binding site. An L-phenylalanine-binding site is contributed by phenylalanine 442.

Belongs to the class-II aminoacyl-tRNA synthetase family. Phe-tRNA synthetase alpha subunit type 2 subfamily. As to quaternary structure, tetramer of two alpha and two beta subunits. Mg(2+) is required as a cofactor.

The protein resides in the cytoplasm. The catalysed reaction is tRNA(Phe) + L-phenylalanine + ATP = L-phenylalanyl-tRNA(Phe) + AMP + diphosphate + H(+). This Methanosarcina mazei (strain ATCC BAA-159 / DSM 3647 / Goe1 / Go1 / JCM 11833 / OCM 88) (Methanosarcina frisia) protein is Phenylalanine--tRNA ligase alpha subunit.